Reading from the N-terminus, the 820-residue chain is 1,4-alpha-glucan-branching enzyme, chloroplastic/amyloplastic (820 aa).

Positions 1-20 are enriched in low complexity; that stretch reads MLCLTSSSSSAPAPLLPSLA. The tract at residues 1-28 is disordered; sequence MLCLTSSSSSAPAPLLPSLADRPSPGIA. The transit peptide at 1–64 directs the protein to the chloroplast; the sequence is MLCLTSSSSS…SVPATARKNK (64 aa). Trp153 and Lys188 together coordinate (1,4-alpha-D-glucosyl)n. Residue Asp409 is the Nucleophile of the active site. The Proton donor role is filled by Glu464.

Belongs to the glycosyl hydrolase 13 family. GlgB subfamily. In terms of assembly, monomer.

The protein resides in the plastid. It is found in the chloroplast. It localises to the amyloplast. It catalyses the reaction Transfers a segment of a (1-&gt;4)-alpha-D-glucan chain to a primary hydroxy group in a similar glucan chain.. Its pathway is glycan biosynthesis; starch biosynthesis. Its function is as follows. Catalyzes the formation of the alpha-1,6-glucosidic linkages in starch by scission of a 1,4-alpha-linked oligosaccharide from growing alpha-1,4-glucan chains and the subsequent attachment of the oligosaccharide to the alpha-1,6 position. The protein is 1,4-alpha-glucan-branching enzyme, chloroplastic/amyloplastic (SBE1) of Oryza sativa subsp. japonica (Rice).